We begin with the raw amino-acid sequence, 478 residues long: Glutamate--tRNA ligase (478 aa).

Positions 9-19 match the 'HIGH' region motif; the sequence is PSPTGLLHIGT. A 'KMSKS' region motif is present at residues 248–252; the sequence is KLSKR. Position 251 (K251) interacts with ATP.

The protein belongs to the class-I aminoacyl-tRNA synthetase family. Glutamate--tRNA ligase type 1 subfamily. As to quaternary structure, monomer.

The protein resides in the cytoplasm. The enzyme catalyses tRNA(Glu) + L-glutamate + ATP = L-glutamyl-tRNA(Glu) + AMP + diphosphate. Catalyzes the attachment of glutamate to tRNA(Glu) in a two-step reaction: glutamate is first activated by ATP to form Glu-AMP and then transferred to the acceptor end of tRNA(Glu). This chain is Glutamate--tRNA ligase, found in Prochlorococcus marinus subsp. pastoris (strain CCMP1986 / NIES-2087 / MED4).